The primary structure comprises 165 residues: Cyclic pyranopterin monophosphate synthase (165 aa).

Substrate contacts are provided by residues 76 to 78 (LCH) and 114 to 115 (ME). The active site involves aspartate 129.

The protein belongs to the MoaC family. In terms of assembly, homohexamer; trimer of dimers.

The catalysed reaction is (8S)-3',8-cyclo-7,8-dihydroguanosine 5'-triphosphate = cyclic pyranopterin phosphate + diphosphate. Its pathway is cofactor biosynthesis; molybdopterin biosynthesis. In terms of biological role, catalyzes the conversion of (8S)-3',8-cyclo-7,8-dihydroguanosine 5'-triphosphate to cyclic pyranopterin monophosphate (cPMP). The protein is Cyclic pyranopterin monophosphate synthase of Brucella abortus (strain 2308).